A 37-amino-acid chain; its full sequence is MKVRSSVKKRCAKCKIIRRKGRVMVICEIPSHKQRQG.

This sequence belongs to the bacterial ribosomal protein bL36 family.

In Aquifex aeolicus (strain VF5), this protein is Large ribosomal subunit protein bL36.